The chain runs to 103 residues: Small ribosomal subunit protein uS10 (103 aa).

The protein belongs to the universal ribosomal protein uS10 family. Part of the 30S ribosomal subunit.

Its function is as follows. Involved in the binding of tRNA to the ribosomes. The protein is Small ribosomal subunit protein uS10 of Pectobacterium atrosepticum (strain SCRI 1043 / ATCC BAA-672) (Erwinia carotovora subsp. atroseptica).